The following is a 447-amino-acid chain: ATP synthase subunit beta (447 aa).

An ATP-binding site is contributed by 147–154 (GGAGVGKT).

It belongs to the ATPase alpha/beta chains family. As to quaternary structure, F-type ATPases have 2 components, CF(1) - the catalytic core - and CF(0) - the membrane proton channel. CF(1) has five subunits: alpha(3), beta(3), gamma(1), delta(1), epsilon(1). CF(0) has three main subunits: a(1), b(2) and c(9-12). The alpha and beta chains form an alternating ring which encloses part of the gamma chain. CF(1) is attached to CF(0) by a central stalk formed by the gamma and epsilon chains, while a peripheral stalk is formed by the delta and b chains.

It localises to the cell membrane. It carries out the reaction ATP + H2O + 4 H(+)(in) = ADP + phosphate + 5 H(+)(out). Functionally, produces ATP from ADP in the presence of a proton gradient across the membrane. The catalytic sites are hosted primarily by the beta subunits. The polypeptide is ATP synthase subunit beta (Carsonella ruddii (strain PV)).